Consider the following 669-residue polypeptide: DNA ligase (669 aa).

NAD(+) is bound at residue 35 to 39; it reads DFEYD. Residues 52–71 form a disordered region; sequence YPEWDSPDSPTHRVGSDKTE. Basic and acidic residues predominate over residues 61–71; it reads PTHRVGSDKTE. NAD(+) is bound by residues 84 to 85 and glutamate 115; that span reads SL. Residue lysine 117 is the N6-AMP-lysine intermediate of the active site. Residues arginine 138, glutamate 175, lysine 290, and lysine 314 each contribute to the NAD(+) site. 4 residues coordinate Zn(2+): cysteine 408, cysteine 411, cysteine 426, and cysteine 432. One can recognise a BRCT domain in the interval 590 to 669; it reads PVSARLAGKT…EEEFLRLIEE (80 aa).

It belongs to the NAD-dependent DNA ligase family. LigA subfamily. Mg(2+) is required as a cofactor. Requires Mn(2+) as cofactor.

The catalysed reaction is NAD(+) + (deoxyribonucleotide)n-3'-hydroxyl + 5'-phospho-(deoxyribonucleotide)m = (deoxyribonucleotide)n+m + AMP + beta-nicotinamide D-nucleotide.. In terms of biological role, DNA ligase that catalyzes the formation of phosphodiester linkages between 5'-phosphoryl and 3'-hydroxyl groups in double-stranded DNA using NAD as a coenzyme and as the energy source for the reaction. It is essential for DNA replication and repair of damaged DNA. This is DNA ligase from Porphyromonas gingivalis (strain ATCC 33277 / DSM 20709 / CIP 103683 / JCM 12257 / NCTC 11834 / 2561).